The chain runs to 72 residues: Translation initiation factor IF-1 (72 aa).

The S1-like domain occupies M1–K72.

It belongs to the IF-1 family. As to quaternary structure, component of the 30S ribosomal translation pre-initiation complex which assembles on the 30S ribosome in the order IF-2 and IF-3, IF-1 and N-formylmethionyl-tRNA(fMet); mRNA recruitment can occur at any time during PIC assembly.

The protein localises to the cytoplasm. Functionally, one of the essential components for the initiation of protein synthesis. Stabilizes the binding of IF-2 and IF-3 on the 30S subunit to which N-formylmethionyl-tRNA(fMet) subsequently binds. Helps modulate mRNA selection, yielding the 30S pre-initiation complex (PIC). Upon addition of the 50S ribosomal subunit IF-1, IF-2 and IF-3 are released leaving the mature 70S translation initiation complex. The protein is Translation initiation factor IF-1 of Rhizobium etli (strain ATCC 51251 / DSM 11541 / JCM 21823 / NBRC 15573 / CFN 42).